A 166-amino-acid polypeptide reads, in one-letter code: Peroxynitrite isomerase Rv2717c (166 aa).

The GXWXGXG motif lies at 28-34; sequence GTWRGQG. Residues Thr40 and His158 each coordinate heme b.

This sequence belongs to the nitrobindin family. Homodimer. The cofactor is heme b.

It is found in the cytoplasm. The catalysed reaction is peroxynitrite = nitrate. It functions in the pathway nitrogen metabolism. Its function is as follows. Heme-binding protein able to scavenge peroxynitrite and to protect free L-tyrosine against peroxynitrite-mediated nitration, by acting as a peroxynitrite isomerase that converts peroxynitrite to nitrate. Therefore, this protein likely plays a role in peroxynitrite sensing and in the detoxification of reactive nitrogen and oxygen species (RNS and ROS, respectively). Is able to bind nitric oxide (NO) in vitro, but may act as a sensor of peroxynitrite levels in vivo. This is Peroxynitrite isomerase Rv2717c from Arabidopsis thaliana (Mouse-ear cress).